The following is a 507-amino-acid chain: ATP synthase subunit alpha, chloroplastic (507 aa).

Residue 170 to 177 (GDRQTGKT) participates in ATP binding.

Belongs to the ATPase alpha/beta chains family. In terms of assembly, F-type ATPases have 2 components, CF(1) - the catalytic core - and CF(0) - the membrane proton channel. CF(1) has five subunits: alpha(3), beta(3), gamma(1), delta(1), epsilon(1). CF(0) has four main subunits: a, b, b' and c.

It is found in the plastid. The protein localises to the chloroplast thylakoid membrane. It carries out the reaction ATP + H2O + 4 H(+)(in) = ADP + phosphate + 5 H(+)(out). Its function is as follows. Produces ATP from ADP in the presence of a proton gradient across the membrane. The alpha chain is a regulatory subunit. This chain is ATP synthase subunit alpha, chloroplastic, found in Vitis vinifera (Grape).